A 1186-amino-acid polypeptide reads, in one-letter code: ATP-dependent helicase/deoxyribonuclease subunit B (1186 aa).

Residues 1–308 enclose the UvrD-like helicase ATP-binding domain; it reads MSVKFLLGRA…AHLEKEWGKN (308 aa). 8 to 15 provides a ligand contact to ATP; sequence GRAGSGKT. The UvrD-like helicase C-terminal domain maps to 288-620; it reads SLPRFKDNPA…LVGTADRSRY (333 aa). 4 residues coordinate [4Fe-4S] cluster: Cys-822, Cys-1144, Cys-1147, and Cys-1153.

The protein belongs to the helicase family. AddB/RexB type 1 subfamily. As to quaternary structure, heterodimer of AddA and AddB. Requires Mg(2+) as cofactor. The cofactor is [4Fe-4S] cluster.

Its function is as follows. The heterodimer acts as both an ATP-dependent DNA helicase and an ATP-dependent, dual-direction single-stranded exonuclease. Recognizes the chi site generating a DNA molecule suitable for the initiation of homologous recombination. The AddB subunit has 5' -&gt; 3' nuclease activity but not helicase activity. This chain is ATP-dependent helicase/deoxyribonuclease subunit B, found in Natranaerobius thermophilus (strain ATCC BAA-1301 / DSM 18059 / JW/NM-WN-LF).